Consider the following 229-residue polypeptide: Cilia- and flagella-associated protein 95 (229 aa).

The Extracellular segment spans residues 1 to 123 (MDSLDRSCQD…LLNEETVSSG (123 aa)). N-linked (GlcNAc...) asparagine glycosylation is present at Asn-75. Residues 124 to 140 (IIERVTGLPATGFGAVF) traverse the membrane as a helical segment. Topologically, residues 141–229 (PRHPPDWSKM…PLTSGPIVPI (89 aa)) are cytoplasmic. Residues 153-163 (LTTYSEDYVPP) are mn.

In terms of assembly, microtubule inner protein component of sperm flagellar doublet microtubules. Interacts with MYH9. Interacts with MYH10. Expressed in undifferentiated embryonic stem cells. Expressed in airway epithelial cells.

It is found in the cytoplasm. Its subcellular location is the cytoskeleton. The protein localises to the cilium axoneme. It localises to the flagellum axoneme. The protein resides in the cell membrane. In terms of biological role, microtubule inner protein (MIP) part of the dynein-decorated doublet microtubules (DMTs) in cilia axoneme, which is required for motile cilia beating. This is Cilia- and flagella-associated protein 95 from Homo sapiens (Human).